A 271-amino-acid polypeptide reads, in one-letter code: Phosphonates import ATP-binding protein PhnC 2 (271 aa).

Residues L2–A245 enclose the ABC transporter domain. ATP is bound at residue G34 to S41.

This sequence belongs to the ABC transporter superfamily. Phosphonates importer (TC 3.A.1.9.1) family. As to quaternary structure, the complex is composed of two ATP-binding proteins (PhnC), two transmembrane proteins (PhnE) and a solute-binding protein (PhnD).

It localises to the cell inner membrane. It carries out the reaction phosphonate(out) + ATP + H2O = phosphonate(in) + ADP + phosphate + H(+). Part of the ABC transporter complex PhnCDE involved in phosphonates import. Responsible for energy coupling to the transport system. The protein is Phosphonates import ATP-binding protein PhnC 2 of Rhodopseudomonas palustris (strain BisB18).